Here is a 194-residue protein sequence, read N- to C-terminus: Interferon alpha (194 aa).

Positions 1-23 (MALPSSFLVALVALGCNSVCSLG) are cleaved as a signal peptide. Cystine bridges form between C24-C123 and C52-C166. Residue N102 is glycosylated (N-linked (GlcNAc...) asparagine).

Belongs to the alpha/beta interferon family.

Its subcellular location is the secreted. Functionally, produced by macrophages, IFN-alpha have antiviral activities. Interferon stimulates the production of two enzymes: a protein kinase and an oligoadenylate synthetase. The sequence is that of Interferon alpha from Felis catus (Cat).